A 444-amino-acid polypeptide reads, in one-letter code: Glutamyl-tRNA reductase (444 aa).

Substrate is bound by residues 49–52 (TCNR), Ser109, 114–116 (ETQ), and Gln120. Cys50 (nucleophile) is an active-site residue. 189 to 194 (GAGKMG) serves as a coordination point for NADP(+).

This sequence belongs to the glutamyl-tRNA reductase family. Homodimer.

The enzyme catalyses (S)-4-amino-5-oxopentanoate + tRNA(Glu) + NADP(+) = L-glutamyl-tRNA(Glu) + NADPH + H(+). The protein operates within porphyrin-containing compound metabolism; protoporphyrin-IX biosynthesis; 5-aminolevulinate from L-glutamyl-tRNA(Glu): step 1/2. Its function is as follows. Catalyzes the NADPH-dependent reduction of glutamyl-tRNA(Glu) to glutamate 1-semialdehyde (GSA). This is Glutamyl-tRNA reductase from Bacillus cereus (strain 03BB102).